Reading from the N-terminus, the 1826-residue chain is Protein TIC 214 (1826 aa).

Helical transmembrane passes span 18-38 (IINS…FSIG), 67-87 (FITG…HLAL), 127-147 (LSIQ…HFIL), 175-195 (VGWL…LVWI), and 221-241 (IFSI…PSPI). The tract at residues 250 to 308 (TEEGWESEEETDVEIETASETKGTKQEQEGSTEEDPSPSLFSEEKEDPDKIDETEEIRV) is disordered. Composition is skewed to acidic residues over residues 252-266 (EGWE…EIET) and 293-304 (EKEDPDKIDETE). Residues 774-794 (LILIIQSIFRKYILLPSLIIV) traverse the membrane as a helical segment. Residues 1032-1057 (TKGLMKEKNSNAKKRGSPNKTSFNRK) form a disordered region. Residues 1042–1057 (NAKKRGSPNKTSFNRK) are compositionally biased toward basic residues. Residues 1081 to 1101 (FYLFITIFIKRIYIDIFVCII) form a helical membrane-spanning segment.

The protein belongs to the TIC214 family. As to quaternary structure, part of the Tic complex.

It localises to the plastid. The protein resides in the chloroplast inner membrane. Its function is as follows. Involved in protein precursor import into chloroplasts. May be part of an intermediate translocation complex acting as a protein-conducting channel at the inner envelope. The sequence is that of Protein TIC 214 from Daucus carota (Wild carrot).